Here is a 256-residue protein sequence, read N- to C-terminus: Imidazole glycerol phosphate synthase subunit HisF (256 aa).

Catalysis depends on residues Asp-11 and Asp-130.

It belongs to the HisA/HisF family. As to quaternary structure, heterodimer of HisH and HisF.

It is found in the cytoplasm. It carries out the reaction 5-[(5-phospho-1-deoxy-D-ribulos-1-ylimino)methylamino]-1-(5-phospho-beta-D-ribosyl)imidazole-4-carboxamide + L-glutamine = D-erythro-1-(imidazol-4-yl)glycerol 3-phosphate + 5-amino-1-(5-phospho-beta-D-ribosyl)imidazole-4-carboxamide + L-glutamate + H(+). It functions in the pathway amino-acid biosynthesis; L-histidine biosynthesis; L-histidine from 5-phospho-alpha-D-ribose 1-diphosphate: step 5/9. IGPS catalyzes the conversion of PRFAR and glutamine to IGP, AICAR and glutamate. The HisF subunit catalyzes the cyclization activity that produces IGP and AICAR from PRFAR using the ammonia provided by the HisH subunit. This Prochlorococcus marinus (strain AS9601) protein is Imidazole glycerol phosphate synthase subunit HisF.